Here is a 1825-residue protein sequence, read N- to C-terminus: Proteasome activator complex subunit 4B (1825 aa).

6 HEAT repeats span residues 458-502, 981-1020, 1162-1200, 1336-1374, 1618-1656, and 1662-1700; these read PEGP…LVDC, NFCC…NHCG, YPLP…QLKR, DAFL…GSKH, PEQI…YNLF, and EQCV…CNFL. A bromodomain-like (BRDL) region spans residues 1632 to 1720; that stretch reads AGSSSWHARY…EALCKTRLPK (89 aa).

It belongs to the BLM10 family. In terms of assembly, homodimer. Interacts with the 20S and 26S proteasomes.

The protein resides in the cytoplasm. It is found in the cytosol. Its subcellular location is the nucleus. The protein localises to the nucleus speckle. Associated component of the proteasome that specifically recognizes acetylated histones and promotes ATP- and ubiquitin-independent degradation of core histones during DNA damage response. Recognizes and binds acetylated histones via its bromodomain-like (BRDL) region and activates the proteasome by opening the gated channel for substrate entry. Binds to the core proteasome via its C-terminus, which occupies the same binding sites as the proteasomal ATPases, opening the closed structure of the proteasome via an active gating mechanism. involved in DNA damage response in somatic cells: binds to acetylated histones and promotes degradation of histones. The polypeptide is Proteasome activator complex subunit 4B (psme4b) (Danio rerio (Zebrafish)).